The following is a 1341-amino-acid chain: DNA-directed RNA polymerase subunit beta (1341 aa).

Belongs to the RNA polymerase beta chain family. In terms of assembly, the RNAP catalytic core consists of 2 alpha, 1 beta, 1 beta' and 1 omega subunit. When a sigma factor is associated with the core the holoenzyme is formed, which can initiate transcription.

The catalysed reaction is RNA(n) + a ribonucleoside 5'-triphosphate = RNA(n+1) + diphosphate. In terms of biological role, DNA-dependent RNA polymerase catalyzes the transcription of DNA into RNA using the four ribonucleoside triphosphates as substrates. This Pseudoalteromonas translucida (strain TAC 125) protein is DNA-directed RNA polymerase subunit beta.